Here is a 101-residue protein sequence, read N- to C-terminus: MVSLSHYLVLGALLFAIGVVGIFLNRKNVIILLMSIELMLLAVNMNFVAFSHFLQDTAGQIFVFFILTVAAAEAAIGLAILVALFRNLRTINVDDLDELKG.

Transmembrane regions (helical) follow at residues 4–24 (LSHYLVLGALLFAIGVVGIFL), 30–50 (IILLMSIELMLLAVNMNFVAF), and 61–81 (IFVFFILTVAAAEAAIGLAIL).

It belongs to the complex I subunit 4L family. In terms of assembly, NDH-1 is composed of 14 different subunits. Subunits NuoA, H, J, K, L, M, N constitute the membrane sector of the complex.

The protein localises to the cell inner membrane. It carries out the reaction a quinone + NADH + 5 H(+)(in) = a quinol + NAD(+) + 4 H(+)(out). Functionally, NDH-1 shuttles electrons from NADH, via FMN and iron-sulfur (Fe-S) centers, to quinones in the respiratory chain. The immediate electron acceptor for the enzyme in this species is believed to be ubiquinone. Couples the redox reaction to proton translocation (for every two electrons transferred, four hydrogen ions are translocated across the cytoplasmic membrane), and thus conserves the redox energy in a proton gradient. In Nitrosomonas europaea (strain ATCC 19718 / CIP 103999 / KCTC 2705 / NBRC 14298), this protein is NADH-quinone oxidoreductase subunit K.